The chain runs to 154 residues: 3-hydroxyacyl-[acyl-carrier-protein] dehydratase FabZ (154 aa).

The active site involves H54.

It belongs to the thioester dehydratase family. FabZ subfamily.

The protein localises to the cytoplasm. It carries out the reaction a (3R)-hydroxyacyl-[ACP] = a (2E)-enoyl-[ACP] + H2O. Involved in unsaturated fatty acids biosynthesis. Catalyzes the dehydration of short chain beta-hydroxyacyl-ACPs and long chain saturated and unsaturated beta-hydroxyacyl-ACPs. This chain is 3-hydroxyacyl-[acyl-carrier-protein] dehydratase FabZ, found in Shewanella sp. (strain MR-4).